The following is a 35-amino-acid chain: 30 kDa neutral phosphatase (35 aa).

The segment covering 1-28 has biased composition (polar residues); the sequence is KSSAEVQQTQQASIPASQKANLGNQNNI. Residues 1-35 are disordered; that stretch reads KSSAEVQQTQQASIPASQKANLGNQNNIMXVAXYQ.

Its function is as follows. Highly cationic enzyme that can bind human or rat immunoglobulins as well as serum albumin, and could therefore be involved in post-infectious sequelae. In Staphylococcus aureus, this protein is 30 kDa neutral phosphatase.